We begin with the raw amino-acid sequence, 124 residues long: Ubiquinol-cytochrome-c reductase complex assembly factor 2 (124 aa).

The N-terminal 13 residues, 1-13, are a transit peptide targeting the mitochondrion; that stretch reads MASLRYRRFLKLC.

It localises to the mitochondrion matrix. Its subcellular location is the mitochondrion nucleoid. It is found in the mitochondrion. Required for the assembly of the ubiquinol-cytochrome c reductase complex (mitochondrial respiratory chain complex III or cytochrome b-c1 complex). May play a role in the modulation of respiratory chain activities such as oxygen consumption and ATP production. May be involved in cytochrome b translation and/or stability. This is Ubiquinol-cytochrome-c reductase complex assembly factor 2 (uqcc2) from Xenopus tropicalis (Western clawed frog).